The primary structure comprises 75 residues: uncharacterized protein (75 aa).

The helical transmembrane segment at 7 to 26 (ATAPLFVIVGLAVVLTGATG) threads the bilayer.

The protein localises to the membrane. This is an uncharacterized protein from Dictyostelium discoideum (Social amoeba).